The following is a 339-amino-acid chain: Histidine protein methyltransferase 1 (339 aa).

Phosphoserine is present on residues serine 333 and serine 338.

This sequence belongs to the methyltransferase superfamily. METTL18 family.

The protein resides in the cytoplasm. The protein localises to the nucleus. It carries out the reaction L-histidyl-[protein] + S-adenosyl-L-methionine = N(tele)-methyl-L-histidyl-[protein] + S-adenosyl-L-homocysteine + H(+). In terms of biological role, protein-histidine N-methyltransferase that mediates methylation of target protein on His residues. In Schizosaccharomyces pombe (strain 972 / ATCC 24843) (Fission yeast), this protein is Histidine protein methyltransferase 1.